A 195-amino-acid polypeptide reads, in one-letter code: Imidazoleglycerol-phosphate dehydratase (195 aa).

The protein belongs to the imidazoleglycerol-phosphate dehydratase family.

The protein localises to the cytoplasm. It carries out the reaction D-erythro-1-(imidazol-4-yl)glycerol 3-phosphate = 3-(imidazol-4-yl)-2-oxopropyl phosphate + H2O. The protein operates within amino-acid biosynthesis; L-histidine biosynthesis; L-histidine from 5-phospho-alpha-D-ribose 1-diphosphate: step 6/9. This is Imidazoleglycerol-phosphate dehydratase from Paraburkholderia phytofirmans (strain DSM 17436 / LMG 22146 / PsJN) (Burkholderia phytofirmans).